The following is a 1843-amino-acid chain: Proteasome activator complex subunit 4 (1843 aa).

A compositionally biased stretch (low complexity) spans 1 to 11; the sequence is MEPAERAGVGE. The disordered stretch occupies residues 1–25; sequence MEPAERAGVGEPPEPGGRPEPGPRG. Pro residues predominate over residues 12–22; sequence PPEPGGRPEPG. HEAT repeat units follow at residues 475–519 and 998–1037; these read PEGP…LVDC and NFCC…NHSG. Position 1121 is a phosphoserine (S1121). HEAT repeat units follow at residues 1179-1217 and 1354-1392; these read RVLP…QLKR and DAFL…GSKH. Phosphoserine is present on S1614. 2 HEAT repeats span residues 1636–1674 and 1680–1718; these read PHQV…YNLF and EDAV…CNFL. The interval 1650-1738 is bromodomain-like (BRDL); the sequence is ARSSSWHARY…EQLCKTKLPK (89 aa). S1746 is modified (phosphoserine).

It belongs to the BLM10 family. As to quaternary structure, homodimer. Interacts with the 20S and 26S proteasomes. Component of the spermatoproteasome, a form of the proteasome specifically found in testis.

It localises to the cytoplasm. The protein resides in the cytosol. The protein localises to the nucleus. Its subcellular location is the nucleus speckle. Associated component of the proteasome that specifically recognizes acetylated histones and promotes ATP- and ubiquitin-independent degradation of core histones during spermatogenesis and DNA damage response. Recognizes and binds acetylated histones via its bromodomain-like (BRDL) region and activates the proteasome by opening the gated channel for substrate entry. Binds to the core proteasome via its C-terminus, which occupies the same binding sites as the proteasomal ATPases, opening the closed structure of the proteasome via an active gating mechanism. Component of the spermatoproteasome, a form of the proteasome specifically found in testis: binds to acetylated histones and promotes degradation of histones, thereby participating actively to the exchange of histones during spermatogenesis. Also involved in DNA damage response in somatic cells, by promoting degradation of histones following DNA double-strand breaks. This Homo sapiens (Human) protein is Proteasome activator complex subunit 4.